The following is a 209-amino-acid chain: Ribosomal RNA large subunit methyltransferase E (209 aa).

Residues glycine 63, tryptophan 65, aspartate 83, aspartate 99, and aspartate 124 each contribute to the S-adenosyl-L-methionine site. Residue lysine 164 is the Proton acceptor of the active site.

This sequence belongs to the class I-like SAM-binding methyltransferase superfamily. RNA methyltransferase RlmE family.

It localises to the cytoplasm. It carries out the reaction uridine(2552) in 23S rRNA + S-adenosyl-L-methionine = 2'-O-methyluridine(2552) in 23S rRNA + S-adenosyl-L-homocysteine + H(+). In terms of biological role, specifically methylates the uridine in position 2552 of 23S rRNA at the 2'-O position of the ribose in the fully assembled 50S ribosomal subunit. In Yersinia enterocolitica serotype O:8 / biotype 1B (strain NCTC 13174 / 8081), this protein is Ribosomal RNA large subunit methyltransferase E.